A 461-amino-acid chain; its full sequence is Transcription factor phm6 (461 aa).

The zn(2)-C6 fungal-type DNA-binding region spans 18-50; it reads CNRCRNHKLKCVVTEAPNGTACCQRCIRAMVPC. 2 disordered regions span residues 55–79 and 256–278; these read RERK…PWET and LQTD…VGAT. Residues 256 to 274 are compositionally biased toward low complexity; the sequence is LQTDDSSSTQSESSRSRAS.

The protein localises to the nucleus. Transcription factor that regulates the expression of the gene cluster that mediates the biosynthesis of the trans-fused decalin-containing tetramic acid phomasetin. In Pyrenochaetopsis sp, this protein is Transcription factor phm6.